The primary structure comprises 430 residues: Serine--tRNA ligase (430 aa).

Positions 41 to 60 (QSRTQDLQNERNVRSKSIGK) are disordered. 236–238 (TAE) serves as a coordination point for L-serine. Residue 267–269 (RSE) participates in ATP binding. Glutamate 290 lines the L-serine pocket. An ATP-binding site is contributed by 354 to 357 (EISS). Serine 390 contributes to the L-serine binding site.

Belongs to the class-II aminoacyl-tRNA synthetase family. Type-1 seryl-tRNA synthetase subfamily. In terms of assembly, homodimer. The tRNA molecule binds across the dimer.

It localises to the cytoplasm. It catalyses the reaction tRNA(Ser) + L-serine + ATP = L-seryl-tRNA(Ser) + AMP + diphosphate + H(+). The enzyme catalyses tRNA(Sec) + L-serine + ATP = L-seryl-tRNA(Sec) + AMP + diphosphate + H(+). It participates in aminoacyl-tRNA biosynthesis; selenocysteinyl-tRNA(Sec) biosynthesis; L-seryl-tRNA(Sec) from L-serine and tRNA(Sec): step 1/1. Catalyzes the attachment of serine to tRNA(Ser). Is also able to aminoacylate tRNA(Sec) with serine, to form the misacylated tRNA L-seryl-tRNA(Sec), which will be further converted into selenocysteinyl-tRNA(Sec). The polypeptide is Serine--tRNA ligase (Alteromonas mediterranea (strain DSM 17117 / CIP 110805 / LMG 28347 / Deep ecotype)).